Here is a 560-residue protein sequence, read N- to C-terminus: Phosphoglucomutase 1 (560 aa).

Alpha-D-glucose 1,6-bisphosphate-binding residues include Arg-24 and Ser-116. The Phosphoserine intermediate role is filled by Ser-116. Residues Ser-116, Asp-288, Asp-290, and Asp-292 each coordinate Mg(2+). Residue Ser-116 is modified to Phosphoserine. Residues Asp-292, Arg-293, Thr-357, Glu-376, Ser-378, and Lys-389 each coordinate alpha-D-glucose 1,6-bisphosphate.

Belongs to the phosphohexose mutase family. Monomer. The cofactor is Mg(2+). As to expression, localized primarily to fat bodies in third instar larvae.

The enzyme catalyses alpha-D-glucose 1-phosphate = alpha-D-glucose 6-phosphate. It catalyses the reaction O-phospho-L-seryl-[protein] + alpha-D-glucose 1-phosphate = alpha-D-glucose 1,6-bisphosphate + L-seryl-[protein]. The catalysed reaction is alpha-D-glucose 1,6-bisphosphate + L-seryl-[protein] = O-phospho-L-seryl-[protein] + alpha-D-glucose 6-phosphate. Functionally, catalyzes the reversible isomerization of alpha-D-glucose 1-phosphate to alpha-D-glucose 6-phosphate. The mechanism proceeds via the intermediate compound alpha-D-glucose 1,6-bisphosphate. This enzyme participates in both the breakdown and synthesis of glucose. Enzyme of the glycolytic pathway. Glycolysis is essential in glial cells but not in neurons; neurons rely on the citric acid cycle for their energy needs, and on lactate and alanine secreted into the hemolymph by glial cells to fuel it. The protein is Phosphoglucomutase 1 of Drosophila melanogaster (Fruit fly).